The sequence spans 323 residues: Down-regulator of invasive growth 2 (323 aa).

Over residues 1–10 (MNKEEQEDPQ) the composition is skewed to acidic residues. The segment at 1-26 (MNKEEQEDPQQEQISTVQENDPRNLQ) is disordered. Positions 11–26 (QEQISTVQENDPRNLQ) are enriched in polar residues. Serine 34 is modified (phosphoserine). The interval 67–87 (LSQKEEDHSGKPPTITTSPAE) is disordered. A phosphoserine mark is found at serine 225, serine 266, and serine 270.

Forms a complex with DIG1, STE12 and either FUS3 or KSS1. The interaction of FUS3 with STE12 depends on the presence of both DIG1 and DIG2. STE12 is lost from FUS3/DIG1/DIG2 complex after pheromone treatment. DIG1 and DIG2 have also been reported to interact with CLN1 and CLN2. Post-translationally, phosphorylated by FUS3 and KSS1, in a pheromone-stimulated manner.

It is found in the nucleus. In terms of biological role, DIG2 and DIG1 are negative regulators of the filamentation and pheromone induced mating program. DIG1 and DIG2 inhibit the transcriptional activity of STE12 by direct protein-protein interaction. DIG2 binds to the DNA binding domain (DBD) of STE12 and thus inhibits transcription when overexpressed. In Saccharomyces cerevisiae (strain ATCC 204508 / S288c) (Baker's yeast), this protein is Down-regulator of invasive growth 2 (DIG2).